The chain runs to 519 residues: Histidine--tRNA ligase (519 aa).

The protein belongs to the class-II aminoacyl-tRNA synthetase family. In terms of assembly, homodimer.

It is found in the cytoplasm. The catalysed reaction is tRNA(His) + L-histidine + ATP = L-histidyl-tRNA(His) + AMP + diphosphate + H(+). This is Histidine--tRNA ligase from Roseobacter denitrificans (strain ATCC 33942 / OCh 114) (Erythrobacter sp. (strain OCh 114)).